Reading from the N-terminus, the 392-residue chain is Cyclic AMP receptor 1 (392 aa).

Residues 1–13 (MGLLDGNPANETS) lie on the Extracellular side of the membrane. A glycan (N-linked (GlcNAc...) asparagine) is linked at asparagine 10. Residues 14–33 (LVLLLFADFSSMLGCMAVLI) form a helical membrane-spanning segment. At 34 to 47 (GFWRLKLLRNHVTK) the chain is on the cytoplasmic side. Residues 48–68 (VIACFCATSFCKDFPSTILTL) traverse the membrane as a helical segment. Residues 69–83 (TNTAVNGGFPCYLYA) lie on the Extracellular side of the membrane. Residues 84–109 (IVITYGSFACWLWTLCLAISIYMLIV) form a helical membrane-spanning segment. Residues 110 to 120 (KREPEPERFEK) lie on the Cytoplasmic side of the membrane. Residues 121-139 (YYYLLCWGLPLISTIVMLA) form a helical membrane-spanning segment. Residues 140-162 (KNTVQFVGNWCWIGVSFTGYRFG) are Extracellular-facing. Residues 163 to 181 (LFYGPFLFIWAISAVLVGL) traverse the membrane as a helical segment. Residues 182–205 (TSRYTYVVIHNGVSDNKEKHLTYQ) lie on the Cytoplasmic side of the membrane. Residues 206-224 (FKLINYIIVFLVCWVFAVV) traverse the membrane as a helical segment. Residues 225–235 (NRIVNGLNMFP) lie on the Extracellular side of the membrane. The helical transmembrane segment at 236 to 260 (PALNILHTYLSVSHGFWASVTFIYN) threads the bilayer. Topologically, residues 261–392 (NPLMWRYFGA…STSTNGQGNN (132 aa)) are cytoplasmic. 2 disordered regions span residues 292-324 (NKNN…VQCS) and 339-392 (VNNQ…QGNN). Residues 298-310 (PSPYSSSRGTSGK) are compositionally biased toward polar residues. Phosphoserine occurs at positions 299, 302, 303, 304, 308, 360, 361, 362, 363, 364, 366, 367, and 368. Residues 340-367 (NNQQNLNNNYGLQQNYNDEGSSSSSLSS) are compositionally biased toward low complexity. Over residues 375–392 (VEMQNIQISTSTNGQGNN) the composition is skewed to polar residues.

Belongs to the G-protein coupled receptor 5 family. Post-translationally, C-terminal Ser or Thr residues may be phosphorylated.

The protein resides in the membrane. Its function is as follows. Receptor for cAMP. Coordinates the aggregation of individual cells into a multicellular organism and regulates the expression of a large number of developmentally regulated genes. The activity of this receptor is mediated by G proteins. This chain is Cyclic AMP receptor 1 (carA-1), found in Dictyostelium discoideum (Social amoeba).